Here is a 61-residue protein sequence, read N- to C-terminus: Ferredoxin (61 aa).

In terms of domain architecture, 4Fe-4S ferredoxin-type spans 2 to 28 (LYITEECTYCGACEPECPTNAISAGSE). Positions 8, 11, 14, 18, 37, 40, 49, and 53 each coordinate [4Fe-4S] cluster.

The cofactor is [4Fe-4S] cluster.

Its function is as follows. Ferredoxins are iron-sulfur proteins that transfer electrons in a wide variety of metabolic reactions. In Chlorobaculum thiosulfatiphilum (Chlorobium limicola f.sp. thiosulfatophilum), this protein is Ferredoxin.